Here is a 310-residue protein sequence, read N- to C-terminus: Tagatose-6-phosphate kinase (310 aa).

Belongs to the carbohydrate kinase PfkB family. LacC subfamily.

The enzyme catalyses D-tagatofuranose 6-phosphate + ATP = D-tagatofuranose 1,6-bisphosphate + ADP + H(+). It functions in the pathway carbohydrate metabolism; D-tagatose 6-phosphate degradation; D-glyceraldehyde 3-phosphate and glycerone phosphate from D-tagatose 6-phosphate: step 1/2. The chain is Tagatose-6-phosphate kinase from Staphylococcus aureus (strain MRSA252).